A 186-amino-acid chain; its full sequence is MNVSKYVAIFSFVFIQLISVGKVFANADEWMTTFRENIAQTWQQPEHYDLYIPAITWHARFAYDKEKTDRYNERPWGGGFGLSRWDEKGNWHGLYAMAFKDSWNKWEPIAGYGWESTWRPLADENFHLGLGFTAGVTARDNWNYIPLPVLLPLASVGYGPVTFQMTYIPGTYNNGNVYFAWMRFQF.

The signal sequence occupies residues 1–25 (MNVSKYVAIFSFVFIQLISVGKVFA). Active-site residues include histidine 58, aspartate 101, and serine 102.

Belongs to the lipid A palmitoyltransferase family. In terms of assembly, homodimer.

The protein localises to the cell outer membrane. The catalysed reaction is lipid A (E. coli) + a 1-hexadecanoyl-2-acyl-sn-glycero-3-phosphocholine = hepta-acyl lipid A (E. coli) + a 2-acyl-sn-glycero-3-phosphocholine. The enzyme catalyses lipid IIA + a 1-hexadecanoyl-2-acyl-sn-glycero-3-phosphocholine = lipid IIB + a 2-acyl-sn-glycero-3-phosphocholine. It catalyses the reaction lipid IVA (E. coli) + a 1-hexadecanoyl-2-acyl-sn-glycero-3-phosphocholine = lipid IVB (E. coli) + a 2-acyl-sn-glycero-3-phosphocholine. With respect to regulation, inhibited by lauryldimethylamine oxide (LDAO) and dodecylphosphocholine (DPC). Transfers a palmitate residue from the sn-1 position of a phospholipid to the N-linked hydroxymyristate on the proximal unit of lipid A or its precursors. Phosphatidylglycerol (PtdGro), phosphatidylethanolamine (PtdEtn), phosphatidylserine (PtdSer) and phosphatidic acid (Ptd-OH) are all effective acyl donors. The protein is Lipid A palmitoyltransferase PagP of Escherichia coli (strain K12).